An 872-amino-acid chain; its full sequence is Probably inactive leucine-rich repeat receptor-like protein kinase At5g06940 (872 aa).

The first 26 residues, 1 to 26 (MATRFKHQFSISLALTFFFFFTKTFS), serve as a signal peptide directing secretion. Over 27–540 (FTENEELGNL…RSNFHKKGGK (514 aa)) the chain is Extracellular. 3 N-linked (GlcNAc...) asparagine glycosylation sites follow: Asn-55, Asn-63, and Asn-86. 18 LRR repeats span residues 79 to 98 (SINL…ICDL), 99 to 122 (PYLT…LSRC), 123 to 146 (VTLE…ISEF), 147 to 169 (SSLK…DLGL), 171 to 193 (FNLQ…AIGK), 195 to 217 (SELV…SFLG), 219 to 243 (LDKL…FVGL), 244 to 267 (TSLR…LGPS), 269 to 292 (KNLV…ICSG), 294 to 316 (RLIN…IGEC), 317 to 340 (LSLE…LWKL), 341 to 365 (PRIK…SLAS), 367 to 389 (LEQV…GLVK), 391 to 412 (LYKF…FCDS), 413 to 435 (PVLS…LKNC), 436 to 459 (KKLV…LADL), 460 to 482 (HVLT…GLQN), and 484 to 506 (KLAL…LVSG). Asn-129 carries an N-linked (GlcNAc...) asparagine glycan. Residue Asn-255 is glycosylated (N-linked (GlcNAc...) asparagine). The N-linked (GlcNAc...) asparagine glycan is linked to Asn-297. N-linked (GlcNAc...) asparagine glycosylation is present at Asn-374. N-linked (GlcNAc...) asparagine glycosylation is present at Asn-419. A glycan (N-linked (GlcNAc...) asparagine) is linked at Asn-489. A helical membrane pass occupies residues 541–561 (ALVLSLICLALAIATFLAVLY). Over 562-872 (RYSRKKVQFK…ISSSVSPVSA (311 aa)) the chain is Cytoplasmic. Position 585 is a phosphothreonine (Thr-585). The 275-residue stretch at 589–863 (LMKVVNESCP…VKVIKLLEGI (275 aa)) folds into the Protein kinase domain. Residues 595 to 603 (ESCPSGSEV) and Lys-617 each bind ATP. Tyr-662, Tyr-699, Tyr-754, and Tyr-761 each carry phosphotyrosine.

Belongs to the protein kinase superfamily. Ser/Thr protein kinase family.

The protein resides in the membrane. This is Probably inactive leucine-rich repeat receptor-like protein kinase At5g06940 from Arabidopsis thaliana (Mouse-ear cress).